Reading from the N-terminus, the 502-residue chain is High affinity nitrate transporter 2.5 (502 aa).

The next 12 membrane-spanning stretches (helical) occupy residues 51-71 (WFQF…LPVI), 87-107 (IASV…CDLF), 111-131 (LASA…AGIK), 133-153 (PIGF…FVST), 172-192 (IAAG…PIVF), 208-228 (IAFF…LLFG), 264-284 (WITA…DNII), 300-320 (GIIA…GGIF), 334-354 (LWAW…LGQI), 361-381 (IIVM…TFGV), 393-413 (VSGM…LIFF), and 423-443 (GITL…LIYF). Residues 477–502 (LHIGSQKFAETSISERGRATTTHPQT) are disordered.

The protein belongs to the major facilitator superfamily. Nitrate/nitrite porter (TC 2.A.1.8) family. Oligomeric molecular complex with NRT3.1. In terms of tissue distribution, expressed in roots, shoots and seeds. Expressed in leaves. Expressed in root hair zone of the primary root and the lateral roots, but not in the lateral root tip or in older parts of the roots. Detected mainly in the epidermis and the cortex. Expressed in shoots only in higher-order veins.

The protein localises to the cell membrane. In terms of biological role, nitrate transporter involved in the constitutive high-affinity transport system (cHATS) under long-term N starvation conditions. Predominantly expressed in roots of nitrate-deprived plants as a 150 kDa molecular complex with NRT3.1 representing the major contributor to cHATS influx. The principal role of this cHATS is to enable roots previously deprived of nitrate to absorb this ion and initiate induction of nitrate-inducible genes. Not involved in transfer of nitrate from roots to shoots. Contributes to phloem loading of nitrate in shoots during N starvation, but not required for growth and nitrate uptake in young plants. Required for the nitrate uptake-independent plant growth promotion and lateral root response to the rhizospheric Phyllobacterium. Might be involved in the transfer of nitrate from stored pools to cytoplasm. The polypeptide is High affinity nitrate transporter 2.5 (NRT2.5) (Arabidopsis thaliana (Mouse-ear cress)).